The primary structure comprises 279 residues: 5'-nucleotidase SurE (279 aa).

The a divalent metal cation site is built by Asp28, Asp29, Ser59, and Asn113.

Belongs to the SurE nucleotidase family. The cofactor is a divalent metal cation.

It localises to the cytoplasm. It catalyses the reaction a ribonucleoside 5'-phosphate + H2O = a ribonucleoside + phosphate. Nucleotidase that shows phosphatase activity on nucleoside 5'-monophosphates. In Methanospirillum hungatei JF-1 (strain ATCC 27890 / DSM 864 / NBRC 100397 / JF-1), this protein is 5'-nucleotidase SurE.